A 189-amino-acid polypeptide reads, in one-letter code: MDTEYEQVNKPWNELYKETTLGNKLMVNVGMEDQEVPLLPSNFLTKVRVGLSGGYITMRRIRIKIIPLVSRKAGVSGKLYLRDISDTKGRKLHCTESLDLGREIRLTMQHLDFSVSTRSDVPIVFGFEELVSPFLEGRELFSISVKWQFGLSKNCYSLPQSKWKVMYQEDALKVLKPSKKKASKTGSSV.

It belongs to the tombusvirus/aureusvirus movement protein p22 family. As to quaternary structure, interacts with host protein HFI22. In terms of processing, phosphorylated.

The protein localises to the host membrane. Transports viral genome to neighboring plant cells directly through plasmosdesmata, without any budding. The movement protein allows efficient cell to cell propagation, by bypassing the host cell wall barrier. This Capsicum annuum (Capsicum pepper) protein is Movement protein.